Consider the following 437-residue polypeptide: Ribosomal protein uS12 methylthiotransferase RimO (437 aa).

The MTTase N-terminal domain maps to 9–128 (NKINVITLGC…LLKALGADYK (120 aa)). [4Fe-4S] cluster-binding residues include C18, C57, C91, C152, C156, and C159. One can recognise a Radical SAM core domain in the interval 138-368 (TTPKNYAYLK…MELQSQISWD (231 aa)). In terms of domain architecture, TRAM spans 371–437 (QEKVGQVFRC…TEFDLYGEPA (67 aa)).

Belongs to the methylthiotransferase family. RimO subfamily. Requires [4Fe-4S] cluster as cofactor.

The protein resides in the cytoplasm. It catalyses the reaction L-aspartate(89)-[ribosomal protein uS12]-hydrogen + (sulfur carrier)-SH + AH2 + 2 S-adenosyl-L-methionine = 3-methylsulfanyl-L-aspartate(89)-[ribosomal protein uS12]-hydrogen + (sulfur carrier)-H + 5'-deoxyadenosine + L-methionine + A + S-adenosyl-L-homocysteine + 2 H(+). Its function is as follows. Catalyzes the methylthiolation of an aspartic acid residue of ribosomal protein uS12. This chain is Ribosomal protein uS12 methylthiotransferase RimO, found in Flavobacterium johnsoniae (strain ATCC 17061 / DSM 2064 / JCM 8514 / BCRC 14874 / CCUG 350202 / NBRC 14942 / NCIMB 11054 / UW101) (Cytophaga johnsonae).